The chain runs to 2026 residues: E3 ubiquitin-protein ligase TRIP12 (2026 aa).

Polar residues-rich tracts occupy residues 1–10 (MSNRPNSNPG), 32–42 (GRNSLSLSVGS), and 73–84 (SSVSEPNITFSP). The interval 1 to 437 (MSNRPNSNPG…SGESESDDSE (437 aa)) is disordered. Composition is skewed to low complexity over residues 94 to 112 (SSHF…AISP), 135 to 161 (AEPA…STPS), 171 to 188 (LLSS…SAAG), and 199 to 241 (AAKP…SSAA). Polar residues predominate over residues 359–371 (QKTTGSCASTSRR). Basic and acidic residues predominate over residues 379–391 (GAAEARRQEKMAD). The segment covering 392–404 (SDNNQDGANSSAA) has biased composition (polar residues). Over residues 412–430 (GASASSSVAGAVGMTTSGE) the composition is skewed to low complexity. Residues 789–876 (MLKKGSAQTT…DPELAKCFIK (88 aa)) form the WWE domain. Disordered stretches follow at residues 1008-1123 (SNVT…SVSN) and 1441-1470 (GCKD…KQDE). The span at 1040–1053 (KRKRLPKRGPRRPK) shows a compositional bias: basic residues. Residues 1056–1065 (PPRDDDKVDN) are compositionally biased toward basic and acidic residues. The segment covering 1068 to 1079 (KSPTTTQSPKSS) has biased composition (low complexity). A compositionally biased stretch (polar residues) spans 1094–1104 (TQANSANSEPS). Residues 1530 to 1604 (EIIPTGEFIN…AMQRLLDTNP (75 aa)) are K-box. An HECT domain is found at 1919–2026 (PDHGYTHDSR…REGQQSFHLS (108 aa)). Cys1993 functions as the Glycyl thioester intermediate in the catalytic mechanism.

Belongs to the UPL family. K-HECT subfamily.

It is found in the nucleus. The protein localises to the nucleoplasm. It carries out the reaction S-ubiquitinyl-[E2 ubiquitin-conjugating enzyme]-L-cysteine + [acceptor protein]-L-lysine = [E2 ubiquitin-conjugating enzyme]-L-cysteine + N(6)-ubiquitinyl-[acceptor protein]-L-lysine.. It participates in protein modification; protein ubiquitination. In terms of biological role, E3 ubiquitin-protein ligase involved in ubiquitin fusion degradation (UFD) pathway and regulation of DNA repair. Part of the ubiquitin fusion degradation (UFD) pathway, a process that mediates ubiquitination of protein at their N-terminus, regardless of the presence of lysine residues in target proteins. Acts as a key regulator of DNA damage response by acting as a suppressor of RNF168, an E3 ubiquitin-protein ligase that promotes accumulation of 'Lys-63'-linked histone H2A and H2AX at DNA damage sites, thereby acting as a guard against excessive spreading of ubiquitinated chromatin at damaged chromosomes. The protein is E3 ubiquitin-protein ligase TRIP12 (trip12) of Danio rerio (Zebrafish).